A 218-amino-acid polypeptide reads, in one-letter code: Large ribosomal subunit protein mL54 (218 aa).

It belongs to the mitochondrion-specific ribosomal protein mL54 family. In terms of assembly, component of the mitochondrial large ribosomal subunit (mt-LSU). Mature N.crassa 74S mitochondrial ribosomes consist of a small (37S) and a large (54S) subunit. The 37S small subunit contains a 16S ribosomal RNA (16S mt-rRNA) and 32 different proteins. The 54S large subunit contains a 23S rRNA (23S mt-rRNA) and 42 different proteins.

The protein localises to the mitochondrion. Its function is as follows. Component of the mitochondrial ribosome (mitoribosome), a dedicated translation machinery responsible for the synthesis of mitochondrial genome-encoded proteins, including at least some of the essential transmembrane subunits of the mitochondrial respiratory chain. The mitoribosomes are attached to the mitochondrial inner membrane and translation products are cotranslationally integrated into the membrane. The sequence is that of Large ribosomal subunit protein mL54 (mrpl37) from Neurospora crassa (strain ATCC 24698 / 74-OR23-1A / CBS 708.71 / DSM 1257 / FGSC 987).